A 158-amino-acid polypeptide reads, in one-letter code: NADH-quinone oxidoreductase subunit B (158 aa).

[4Fe-4S] cluster contacts are provided by cysteine 37, cysteine 38, cysteine 102, and cysteine 132.

This sequence belongs to the complex I 20 kDa subunit family. As to quaternary structure, NDH-1 is composed of 14 different subunits. Subunits NuoB, C, D, E, F, and G constitute the peripheral sector of the complex. The cofactor is [4Fe-4S] cluster.

Its subcellular location is the cell inner membrane. The enzyme catalyses a quinone + NADH + 5 H(+)(in) = a quinol + NAD(+) + 4 H(+)(out). Functionally, NDH-1 shuttles electrons from NADH, via FMN and iron-sulfur (Fe-S) centers, to quinones in the respiratory chain. Couples the redox reaction to proton translocation (for every two electrons transferred, four hydrogen ions are translocated across the cytoplasmic membrane), and thus conserves the redox energy in a proton gradient. The chain is NADH-quinone oxidoreductase subunit B from Bordetella parapertussis (strain 12822 / ATCC BAA-587 / NCTC 13253).